A 434-amino-acid chain; its full sequence is Beta-phenylalanine transaminase (434 aa).

R41 provides a ligand contact to (S)-3-amino-3-phenylpropanoate. Residue G132–T133 coordinates pyridoxal 5'-phosphate. The residue at position 267 (K267) is an N6-(pyridoxal phosphate)lysine. T300 lines the pyridoxal 5'-phosphate pocket.

It belongs to the class-III pyridoxal-phosphate-dependent aminotransferase family. In terms of assembly, homodimer. Requires pyridoxal 5'-phosphate as cofactor.

The catalysed reaction is (S)-3-amino-3-phenylpropanoate + 2-oxoglutarate = 3-oxo-3-phenylpropanoate + L-glutamate. It catalyses the reaction (S)-3-amino-3-phenylpropanoate + pyruvate = 3-oxo-3-phenylpropanoate + L-alanine. With respect to regulation, is inhibited by 2-aminooxyacetate (AOA), a mimic of beta-alanine and a known inhibitor of aminotransferases. Aminotransferase that acts exclusively on beta-amino acids and exhibits a broad substrate range in vitro, accepting meta-, para- and, to a lesser extent, ortho-substituted beta-phenylalanine derivatives as amino donors, and 2-oxoglutarate or pyruvate as amino acceptors. Is highly enantioselective toward (S)-beta-phenylalanine (is not active with (R)-beta-phenylalanine) and derivatives with different substituents on the phenyl ring, allowing the kinetic resolution of various racemic beta-amino acids to yield (R)-beta-amino acids with &gt;95% enantiomeric excess (ee). Highly prefers aromatic beta-amino acids over aliphatic beta-amino acids; cannot use beta-alanine or beta-glutamate as substrate. Is likely involved in the beta-phenylalanine degradation pathway that allows V.paradoxus strain CBF3 to use beta-phenylalanine as a sole nitrogen source. The chain is Beta-phenylalanine transaminase from Variovorax paradoxus.